The primary structure comprises 75 residues: Small ribosomal subunit protein bS18 (75 aa).

Belongs to the bacterial ribosomal protein bS18 family. In terms of assembly, part of the 30S ribosomal subunit. Forms a tight heterodimer with protein bS6.

Binds as a heterodimer with protein bS6 to the central domain of the 16S rRNA, where it helps stabilize the platform of the 30S subunit. This is Small ribosomal subunit protein bS18 from Vibrio atlanticus (strain LGP32) (Vibrio splendidus (strain Mel32)).